We begin with the raw amino-acid sequence, 317 residues long: 17-beta-hydroxysteroid dehydrogenase type 6 (317 aa).

The first 17 residues, 1–17, serve as a signal peptide directing secretion; sequence MWFYLVTLVGLYYLLRW. 33-57 lines the NAD(+) pocket; it reads FITGCDSGFGNLLARQLDRRGMRVL. N-linked (GlcNAc...) asparagine glycosylation occurs at Asn-161. Ser-164 provides a ligand contact to substrate. Tyr-176 functions as the Proton acceptor in the catalytic mechanism.

This sequence belongs to the short-chain dehydrogenases/reductases (SDR) family. As to expression, detected in prostate, liver and kidney.

It localises to the microsome membrane. The protein resides in the endoplasmic reticulum membrane. It carries out the reaction all-trans-retinol--[retinol-binding protein] + NAD(+) = all-trans-retinal--[retinol-binding protein] + NADH + H(+). The enzyme catalyses all-trans-retinol + NAD(+) = all-trans-retinal + NADH + H(+). The catalysed reaction is androsterone + NAD(+) = 5alpha-androstan-3,17-dione + NADH + H(+). It catalyses the reaction testosterone + NAD(+) = androst-4-ene-3,17-dione + NADH + H(+). It carries out the reaction 5alpha-androstane-3alpha,17beta-diol + NAD(+) = 17beta-hydroxy-5alpha-androstan-3-one + NADH + H(+). The enzyme catalyses 17beta-estradiol + NAD(+) = estrone + NADH + H(+). The catalysed reaction is 17beta-estradiol + NADP(+) = estrone + NADPH + H(+). It catalyses the reaction 3alpha-hydroxy-5alpha-pregnan-20-one + NAD(+) = 5alpha-pregnane-3,20-dione + NADH + H(+). It carries out the reaction 5alpha-androstane-3beta,17beta-diol + NAD(+) = 17beta-hydroxy-5alpha-androstan-3-one + NADH + H(+). The enzyme catalyses 3beta-hydroxy-5alpha-androstan-17-one + NAD(+) = 5alpha-androstan-3,17-dione + NADH + H(+). With respect to regulation, competitively inhibited by 9-cis-retinoic acid and 13-cis-retinoic acid. Functionally, NAD-dependent oxidoreductase with broad substrate specificity that shows both oxidative and reductive activity (in vitro). Has retinol dehydrogenase activity towards all-trans-retinol (in vitro). Has 17-beta-hydroxysteroid dehydrogenase activity towards various steroids (in vitro). Converts 5-alpha-androstan-3-alpha,17-beta-diol to androsterone and estradiol to estrone (in vitro). Has 3-alpha-hydroxysteroid dehydrogenase activity towards androsterone (in vitro). This Rattus norvegicus (Rat) protein is 17-beta-hydroxysteroid dehydrogenase type 6 (Hsd17b6).